We begin with the raw amino-acid sequence, 72 residues long: Small ribosomal subunit protein bS18c (72 aa).

Belongs to the bacterial ribosomal protein bS18 family. In terms of assembly, part of the 30S ribosomal subunit.

The protein localises to the plastid. The protein resides in the chloroplast. This Thalassiosira pseudonana (Marine diatom) protein is Small ribosomal subunit protein bS18c.